Reading from the N-terminus, the 279-residue chain is Energy-coupling factor transporter ATP-binding protein EcfA1 (279 aa).

The ABC transporter domain occupies 8 to 240; it reads IKFENVSFSY…KQFLRDINLD (233 aa). 41–48 serves as a coordination point for ATP; the sequence is GHNGSGKS.

The protein belongs to the ABC transporter superfamily. Energy-coupling factor EcfA family. Forms a stable energy-coupling factor (ECF) transporter complex composed of 2 membrane-embedded substrate-binding proteins (S component), 2 ATP-binding proteins (A component) and 2 transmembrane proteins (T component).

The protein resides in the cell membrane. ATP-binding (A) component of a common energy-coupling factor (ECF) ABC-transporter complex. Unlike classic ABC transporters this ECF transporter provides the energy necessary to transport a number of different substrates. In Mycoplasmoides gallisepticum (strain R(low / passage 15 / clone 2)) (Mycoplasma gallisepticum), this protein is Energy-coupling factor transporter ATP-binding protein EcfA1.